The following is a 102-amino-acid chain: A-type ATP synthase subunit F (102 aa).

The protein belongs to the V-ATPase F subunit family. Has multiple subunits with at least A(3), B(3), C, D, E, F, H, I and proteolipid K(x).

The protein localises to the cell membrane. In terms of biological role, component of the A-type ATP synthase that produces ATP from ADP in the presence of a proton gradient across the membrane. The protein is A-type ATP synthase subunit F of Thermococcus kodakarensis (strain ATCC BAA-918 / JCM 12380 / KOD1) (Pyrococcus kodakaraensis (strain KOD1)).